The following is a 714-amino-acid chain: Polyribonucleotide nucleotidyltransferase (714 aa).

2 residues coordinate Mg(2+): aspartate 488 and aspartate 494. Residues 555-614 (PRIEVMNIPTDKIRDVIGSGGKVIREIVEKTGAKINIEDDGTVKIASSNGKEIEAAKKWI) enclose the KH domain. One can recognise an S1 motif domain in the interval 624-692 (GEIYEGTVVK…ERGKVRLSMK (69 aa)).

This sequence belongs to the polyribonucleotide nucleotidyltransferase family. Mg(2+) is required as a cofactor.

The protein resides in the cytoplasm. It carries out the reaction RNA(n+1) + phosphate = RNA(n) + a ribonucleoside 5'-diphosphate. Functionally, involved in mRNA degradation. Catalyzes the phosphorolysis of single-stranded polyribonucleotides processively in the 3'- to 5'-direction. The polypeptide is Polyribonucleotide nucleotidyltransferase (Brucella suis biovar 1 (strain 1330)).